The primary structure comprises 118 residues: Co-chaperonin GroES (118 aa).

This sequence belongs to the GroES chaperonin family. As to quaternary structure, heptamer of 7 subunits arranged in a ring. Interacts with the chaperonin GroEL.

It is found in the cytoplasm. Functionally, together with the chaperonin GroEL, plays an essential role in assisting protein folding. The GroEL-GroES system forms a nano-cage that allows encapsulation of the non-native substrate proteins and provides a physical environment optimized to promote and accelerate protein folding. GroES binds to the apical surface of the GroEL ring, thereby capping the opening of the GroEL channel. The chain is Co-chaperonin GroES from Helicobacter pylori (strain P12).